A 125-amino-acid chain; its full sequence is Small ribosomal subunit protein uS12c (125 aa).

The tract at residues 104–125 (ASGVKDRKQGRSKYGGKRPKGD) is disordered. Over residues 113–125 (GRSKYGGKRPKGD) the composition is skewed to basic residues.

The protein belongs to the universal ribosomal protein uS12 family. Part of the 30S ribosomal subunit.

Its subcellular location is the plastid. The protein resides in the chloroplast. Its function is as follows. With S4 and S5 plays an important role in translational accuracy. Located at the interface of the 30S and 50S subunits. This chain is Small ribosomal subunit protein uS12c (rps12), found in Emiliania huxleyi (Coccolithophore).